We begin with the raw amino-acid sequence, 855 residues long: DNA mismatch repair protein MutS (855 aa).

615–622 contacts ATP; it reads GPNMGGKS.

It belongs to the DNA mismatch repair MutS family.

Functionally, this protein is involved in the repair of mismatches in DNA. It is possible that it carries out the mismatch recognition step. This protein has a weak ATPase activity. In Aliivibrio salmonicida (strain LFI1238) (Vibrio salmonicida (strain LFI1238)), this protein is DNA mismatch repair protein MutS.